The chain runs to 264 residues: Thymidylate synthase (264 aa).

Residues R21 and 126 to 127 (RR) contribute to the dUMP site. The active-site Nucleophile is C146. Residues 166–169 (RSAD), N177, and 207–209 (HLY) each bind dUMP. D169 contacts (6R)-5,10-methylene-5,6,7,8-tetrahydrofolate. Residue A263 coordinates (6R)-5,10-methylene-5,6,7,8-tetrahydrofolate.

Belongs to the thymidylate synthase family. Bacterial-type ThyA subfamily. In terms of assembly, homodimer.

The protein localises to the cytoplasm. The enzyme catalyses dUMP + (6R)-5,10-methylene-5,6,7,8-tetrahydrofolate = 7,8-dihydrofolate + dTMP. Its pathway is pyrimidine metabolism; dTTP biosynthesis. Its function is as follows. Catalyzes the reductive methylation of 2'-deoxyuridine-5'-monophosphate (dUMP) to 2'-deoxythymidine-5'-monophosphate (dTMP) while utilizing 5,10-methylenetetrahydrofolate (mTHF) as the methyl donor and reductant in the reaction, yielding dihydrofolate (DHF) as a by-product. This enzymatic reaction provides an intracellular de novo source of dTMP, an essential precursor for DNA biosynthesis. The sequence is that of Thymidylate synthase from Rhodopseudomonas palustris (strain BisB5).